The primary structure comprises 594 residues: Capsid vertex component 1 (594 aa).

4 disordered regions span residues 52–77 (GRST…DAVG), 176–205 (NKRD…NGSD), 443–468 (ARRQ…SGPP), and 575–594 (GRQE…FDDL). Acidic residues predominate over residues 61-76 (GDEDDAPASDDAEDAV).

This sequence belongs to the herpesviridae CVC1 protein family. As to quaternary structure, interacts (via C-terminus) with capsid vertex component 2/CVC2.

The protein resides in the virion. The protein localises to the host nucleus. Functionally, capsid vertex-specific component that plays a role during viral DNA encapsidation, assuring correct genome cleavage and presumably stabilizing capsids that contain full-length viral genomes. In Homo sapiens (Human), this protein is Capsid vertex component 1.